The sequence spans 142 residues: MKTFTAKPSNIKREWLLIDATDKTLGRLATEVAMILRGKNKPEYTPHMDTGDYVVIVNAEKIAVTGNKRKAKTYYHHTGYIGGIKSVSFEKLIATHPERAIEKAVRGMLPRTPLGRTMFKKLKVYAGEAHPHTAQQPKAHNI.

It belongs to the universal ribosomal protein uL13 family. As to quaternary structure, part of the 50S ribosomal subunit.

In terms of biological role, this protein is one of the early assembly proteins of the 50S ribosomal subunit, although it is not seen to bind rRNA by itself. It is important during the early stages of 50S assembly. This is Large ribosomal subunit protein uL13 from Francisella tularensis subsp. holarctica (strain FTNF002-00 / FTA).